The following is a 312-amino-acid chain: Pantothenate kinase (312 aa).

Glycine 97 to serine 104 contacts ATP.

This sequence belongs to the prokaryotic pantothenate kinase family.

It is found in the cytoplasm. It carries out the reaction (R)-pantothenate + ATP = (R)-4'-phosphopantothenate + ADP + H(+). It functions in the pathway cofactor biosynthesis; coenzyme A biosynthesis; CoA from (R)-pantothenate: step 1/5. This Corynebacterium glutamicum (strain ATCC 13032 / DSM 20300 / JCM 1318 / BCRC 11384 / CCUG 27702 / LMG 3730 / NBRC 12168 / NCIMB 10025 / NRRL B-2784 / 534) protein is Pantothenate kinase.